A 140-amino-acid chain; its full sequence is Profilin (140 aa).

Ser-2 carries the post-translational modification N-acetylserine.

This sequence belongs to the profilin family. As to quaternary structure, occurs in many kinds of cells as a complex with monomeric actin in a 1:1 ratio.

The protein localises to the cytoplasm. Its subcellular location is the cytoskeleton. Binds to actin and affects the structure of the cytoskeleton. At high concentrations, profilin prevents the polymerization of actin, whereas it enhances it at low concentrations. By binding to PIP2, it inhibits the formation of IP3 and DG. The chain is Profilin from Clypeaster japonicus (Sand dollar).